Here is a 352-residue protein sequence, read N- to C-terminus: B1 bradykinin receptor (352 aa).

Residues Met-1 to Thr-41 are Extracellular-facing. 2 N-linked (GlcNAc...) asparagine glycosylation sites follow: Asn-13 and Asn-21. The helical transmembrane segment at Phe-42 to Leu-62 threads the bilayer. Over Leu-63 to Glu-72 the chain is Cytoplasmic. Residues Ile-73–Ala-93 traverse the membrane as a helical segment. The Extracellular portion of the chain corresponds to Glu-94–Arg-110. Cys-109 and Cys-188 form a disulfide bridge. A helical membrane pass occupies residues Gly-111–Ser-131. At Gln-132–Ala-153 the chain is on the cytoplasmic side. Residues Arg-154–Leu-174 form a helical membrane-spanning segment. The Extracellular segment spans residues Arg-175 to Asn-206. An N-linked (GlcNAc...) asparagine glycan is attached at Asn-184. The helical transmembrane segment at Ile-207 to Ser-227 threads the bilayer. Residues Leu-228–Leu-250 lie on the Cytoplasmic side of the membrane. A helical transmembrane segment spans residues Ile-251–Leu-271. Residues Glu-272 to Gln-294 are Extracellular-facing. The helical transmembrane segment at Leu-295–Gly-315 threads the bilayer. The Cytoplasmic portion of the chain corresponds to Arg-316–Asn-352. The S-palmitoyl cysteine moiety is linked to residue Cys-329.

It belongs to the G-protein coupled receptor 1 family. Bradykinin receptor subfamily. BDKRB1 sub-subfamily.

The protein localises to the cell membrane. Functionally, this is a receptor for bradykinin. Could be a factor in chronic pain and inflammation. This is B1 bradykinin receptor (BDKRB1) from Chlorocebus aethiops (Green monkey).